Consider the following 242-residue polypeptide: Octanoyltransferase (242 aa).

The BPL/LPL catalytic domain occupies 31 to 206; the sequence is SQTTDEIWFL…LFLKNFGYNQ (176 aa). Substrate-binding positions include 70–77, 137–139, and 150–152; these read RGGQVTYH, SIG, and GLA. Cys-168 (acyl-thioester intermediate) is an active-site residue.

It belongs to the LipB family.

The protein localises to the cytoplasm. The catalysed reaction is octanoyl-[ACP] + L-lysyl-[protein] = N(6)-octanoyl-L-lysyl-[protein] + holo-[ACP] + H(+). The protein operates within protein modification; protein lipoylation via endogenous pathway; protein N(6)-(lipoyl)lysine from octanoyl-[acyl-carrier-protein]: step 1/2. Catalyzes the transfer of endogenously produced octanoic acid from octanoyl-acyl-carrier-protein onto the lipoyl domains of lipoate-dependent enzymes. Lipoyl-ACP can also act as a substrate although octanoyl-ACP is likely to be the physiological substrate. The chain is Octanoyltransferase from Coxiella burnetii (strain CbuK_Q154) (Coxiella burnetii (strain Q154)).